We begin with the raw amino-acid sequence, 133 residues long: ATP synthase epsilon chain (133 aa).

The protein belongs to the ATPase epsilon chain family. In terms of assembly, F-type ATPases have 2 components, CF(1) - the catalytic core - and CF(0) - the membrane proton channel. CF(1) has five subunits: alpha(3), beta(3), gamma(1), delta(1), epsilon(1). CF(0) has three main subunits: a, b and c.

It is found in the cell membrane. Functionally, produces ATP from ADP in the presence of a proton gradient across the membrane. This is ATP synthase epsilon chain from Staphylococcus haemolyticus (strain JCSC1435).